Consider the following 640-residue polypeptide: Threonine--tRNA ligase (640 aa).

Residues 1–61 (MPTITLPDGS…ENDASLQIIT (61 aa)) form the TGS domain. Positions 242–533 (DHRKIGKRLG…LIEHYEGAFP (292 aa)) are catalytic. Zn(2+) contacts are provided by cysteine 333, histidine 384, and histidine 510.

It belongs to the class-II aminoacyl-tRNA synthetase family. Homodimer. Requires Zn(2+) as cofactor.

The protein resides in the cytoplasm. The catalysed reaction is tRNA(Thr) + L-threonine + ATP = L-threonyl-tRNA(Thr) + AMP + diphosphate + H(+). Its function is as follows. Catalyzes the attachment of threonine to tRNA(Thr) in a two-step reaction: L-threonine is first activated by ATP to form Thr-AMP and then transferred to the acceptor end of tRNA(Thr). Also edits incorrectly charged L-seryl-tRNA(Thr). The polypeptide is Threonine--tRNA ligase (Pseudomonas syringae pv. syringae (strain B728a)).